Here is an 860-residue protein sequence, read N- to C-terminus: Protein argonaute-2 (860 aa).

Positions M1 to P30 are disordered. Y2 carries the post-translational modification 3'-nitrotyrosine. Residues L9–P30 show a composition bias toward pro residues. The region spanning P230–A349 is the PAZ domain. An interaction with guide RNA region spans residues Y312 to H317. A Phosphoserine modification is found at S388. One can recognise a Piwi domain in the interval L518–V819. Positions G525–K567 are interaction with guide RNA. The tract at residues F588–P591 is interaction with GW182 family members. A divalent metal cation is bound at residue D598. The interaction with GW182 family members stretch occupies residues L651 to K661. Position 670 (D670) interacts with a divalent metal cation. At P701 the chain carries 4-hydroxyproline. Interaction with guide RNA stretches follow at residues K710–R711, H754–R762, and Y791–R813. H808 lines the a divalent metal cation pocket. Phosphoserine is present on residues S825, S829, S832, and S835.

The protein belongs to the argonaute family. Ago subfamily. In terms of assembly, interacts with DICER1 through its Piwi domain and with TARBP2 during assembly of the RNA-induced silencing complex (RISC). Together, DICER1, AGO2 and TARBP2 constitute the trimeric RISC loading complex (RLC), or micro-RNA (miRNA) loading complex (miRLC). Within the RLC/miRLC, DICER1 and TARBP2 are required to process precursor miRNAs (pre-miRNAs) to mature miRNAs and then load them onto AGO2. AGO2 bound to the mature miRNA constitutes the minimal RISC and may subsequently dissociate from DICER1 and TARBP2. Note however that the term RISC has also been used to describe the trimeric RLC/miRLC. The formation of RISC complexes containing siRNAs rather than miRNAs appears to occur independently of DICER1. Interacts with AGO1. Also interacts with DDB1, DDX5, DDX6, DDX20, DHX30, DHX36, DDX47, DHX9, ELAVL, FXR1, GEMIN4, HNRNPF, IGF2BP1, ILF3, IMP8, MATR3, PABPC1, PRMT5, P4HA1, P4HB, RBM4, SART3, TNRC6A, TNRC6B, UPF1 and YBX1. Interacts with the P-body components DCP1A and XRN1. Associates with polysomes and messenger ribonucleoproteins (mNRPs). Interacts with RBM4; the interaction is modulated under stress-induced conditions, occurs under both cell proliferation and differentiation conditions and in an RNA- and phosphorylation-independent manner. Interacts with LIMD1, WTIP and AJUBA. Interacts with TRIM71; the interaction increases in presence of RNA. Interacts with APOBEC3G in an RNA-dependent manner. Interacts with APOBEC3A, APOBEC3C, APOBEC3F and APOBEC3H. Interacts with DICER1, TARBP2, EIF6, MOV10 and RPL7A (60S ribosome subunit); they form a large RNA-induced silencing complex (RISC). Interacts with FMR1. Interacts with ZFP36. Interacts with RC3H1; the interaction is RNA independent. Found in a complex composed of AGO2, CHD7 and ARB2A. Interacts with SND1 and SYT11. Interacts with CLNK. Interacts with GARRE1. Interacts with GRB2; this interaction is important for the formation of a ternary complex containing GRB2, AGO2 and DICER1. Mg(2+) is required as a cofactor. The cofactor is Mn(2+). Hydroxylated. 4-hydroxylation appears to enhance protein stability but is not required for miRNA-binding or endonuclease activity. In terms of processing, ubiquitinated on surface-exposed lysines by a SCF-like E3 ubiquitin-protein ligase complex containing ZSWIM8 during target-directed microRNA degradation (TDMD), a process that mediates degradation of microRNAs (miRNAs). Ubiquitination by the SCF-like E3 ubiquitin-protein ligase complex containing ZSWIM8 leads to its subsequent degradation, thereby exposing miRNAs for degradation. ZSWIM8 recognizes and binds AGO2 when it is engaged with a TDMD target. Post-translationally, phosphorylation at Ser-388 by AKT3; leads to up-regulate translational repression of microRNA target and down-regulate endonucleolytic cleavage. A phosphorylation cycle of C-terminal serine cluster (Ser-825-Ser-835) regulates the release of target mRNAs. Target-binding leads to phosphorylation of these residues by CSNK1A1, which reduces the affinity of AGO2 for mRNA and enables target release. The ANKRD52-PPP6C phosphatase complex dephosphorylates the residues, which primes AGO2 for binding a new target.

It is found in the cytoplasm. The protein resides in the P-body. It localises to the nucleus. It carries out the reaction Endonucleolytic cleavage to 5'-phosphomonoester.. In terms of biological role, required for RNA-mediated gene silencing (RNAi) by the RNA-induced silencing complex (RISC). The 'minimal RISC' appears to include AGO2 bound to a short guide RNA such as a microRNA (miRNA) or short interfering RNA (siRNA). These guide RNAs direct RISC to complementary mRNAs that are targets for RISC-mediated gene silencing. The precise mechanism of gene silencing depends on the degree of complementarity between the miRNA or siRNA and its target. Binding of RISC to a perfectly complementary mRNA generally results in silencing due to endonucleolytic cleavage of the mRNA specifically by AGO2. Binding of RISC to a partially complementary mRNA results in silencing through inhibition of translation, and this is independent of endonuclease activity. May inhibit translation initiation by binding to the 7-methylguanosine cap, thereby preventing the recruitment of the translation initiation factor eIF4-E. May also inhibit translation initiation via interaction with EIF6, which itself binds to the 60S ribosomal subunit and prevents its association with the 40S ribosomal subunit. The inhibition of translational initiation leads to the accumulation of the affected mRNA in cytoplasmic processing bodies (P-bodies), where mRNA degradation may subsequently occur. In some cases RISC-mediated translational repression is also observed for miRNAs that perfectly match the 3' untranslated region (3'-UTR). Can also up-regulate the translation of specific mRNAs under certain growth conditions. Binds to the AU element of the 3'-UTR of the TNF (TNF-alpha) mRNA and up-regulates translation under conditions of serum starvation. Also required for transcriptional gene silencing (TGS), in which short RNAs known as antigene RNAs or agRNAs direct the transcriptional repression of complementary promoter regions. This chain is Protein argonaute-2 (AGO2), found in Bos taurus (Bovine).